A 250-amino-acid polypeptide reads, in one-letter code: Pyrroloquinoline-quinone synthase (250 aa).

Belongs to the PqqC family.

The enzyme catalyses 6-(2-amino-2-carboxyethyl)-7,8-dioxo-1,2,3,4,7,8-hexahydroquinoline-2,4-dicarboxylate + 3 O2 = pyrroloquinoline quinone + 2 H2O2 + 2 H2O + H(+). The protein operates within cofactor biosynthesis; pyrroloquinoline quinone biosynthesis. In terms of biological role, ring cyclization and eight-electron oxidation of 3a-(2-amino-2-carboxyethyl)-4,5-dioxo-4,5,6,7,8,9-hexahydroquinoline-7,9-dicarboxylic-acid to PQQ. The polypeptide is Pyrroloquinoline-quinone synthase (Pseudomonas aeruginosa (strain LESB58)).